The sequence spans 459 residues: GTPase Der (459 aa).

EngA-type G domains lie at 3-169 and 183-358; these read PLVA…PPKE and IRLA…DQFR. Residues 9–16, 56–60, 119–122, 189–196, 236–240, and 301–304 each bind GTP; these read GRPNVGKS, DTGGF, NKLD, DTAGI, and NKWD. The 84-residue stretch at 359–442 folds into the KH-like domain; that stretch reads FRAPTPQLNR…PIRLIFKGRP (84 aa).

Belongs to the TRAFAC class TrmE-Era-EngA-EngB-Septin-like GTPase superfamily. EngA (Der) GTPase family. In terms of assembly, associates with the 50S ribosomal subunit.

Functionally, GTPase that plays an essential role in the late steps of ribosome biogenesis. This Myxococcus xanthus (strain DK1622) protein is GTPase Der.